Here is a 97-residue protein sequence, read N- to C-terminus: Translation initiation factor 1A (97 aa).

An S1-like domain is found at 8 to 82 (IRVRLPDRKK…DRADIVWRYT (75 aa)).

It belongs to the eIF-1A family.

In terms of biological role, seems to be required for maximal rate of protein biosynthesis. Enhances ribosome dissociation into subunits and stabilizes the binding of the initiator Met-tRNA(I) to 40 S ribosomal subunits. The polypeptide is Translation initiation factor 1A (eIF1A) (Archaeoglobus fulgidus (strain ATCC 49558 / DSM 4304 / JCM 9628 / NBRC 100126 / VC-16)).